We begin with the raw amino-acid sequence, 375 residues long: Chaperone protein DnaJ (375 aa).

Positions 5–70 (DYYEVLGVER…GKRMAYDQYG (66 aa)) constitute a J domain. The segment at 134–212 (GTTVTIRVPT…CHGQGRVEEH (79 aa)) adopts a CR-type zinc-finger fold. Cys-147, Cys-150, Cys-164, Cys-167, Cys-186, Cys-189, Cys-200, and Cys-203 together coordinate Zn(2+). CXXCXGXG motif repeat units follow at residues 147 to 154 (CKTCDGSG), 164 to 171 (CTTCGGIG), 186 to 193 (CPRCHGSG), and 200 to 207 (CPDCHGQG).

Belongs to the DnaJ family. In terms of assembly, homodimer. The cofactor is Zn(2+).

The protein resides in the cytoplasm. Its function is as follows. Participates actively in the response to hyperosmotic and heat shock by preventing the aggregation of stress-denatured proteins and by disaggregating proteins, also in an autonomous, DnaK-independent fashion. Unfolded proteins bind initially to DnaJ; upon interaction with the DnaJ-bound protein, DnaK hydrolyzes its bound ATP, resulting in the formation of a stable complex. GrpE releases ADP from DnaK; ATP binding to DnaK triggers the release of the substrate protein, thus completing the reaction cycle. Several rounds of ATP-dependent interactions between DnaJ, DnaK and GrpE are required for fully efficient folding. Also involved, together with DnaK and GrpE, in the DNA replication of plasmids through activation of initiation proteins. In Azotobacter vinelandii (strain DJ / ATCC BAA-1303), this protein is Chaperone protein DnaJ.